The following is a 455-amino-acid chain: uncharacterized protein (455 aa).

N-linked (GlcNAc...) asparagine glycosylation is found at N42, N49, and N70. The next 4 helical transmembrane spans lie at 127-147 (AILI…TWIF), 153-173 (SLLD…MFRI), 177-197 (ICAL…ITYY), and 377-397 (YKFC…EIIF). A glycan (N-linked (GlcNAc...) asparagine) is linked at N403.

The protein localises to the membrane. This is an uncharacterized protein from Caenorhabditis elegans.